Consider the following 339-residue polypeptide: DNA-directed RNA polymerase subunit alpha (339 aa).

The segment at 1-233 is alpha N-terminal domain (alpha-NTD); the sequence is MVREEVAGST…DLFLPFLHAE (233 aa). Positions 264–339 are alpha C-terminal domain (alpha-CTD); that stretch reads KKGIPLNCIF…IDLLKNKLSF (76 aa).

It belongs to the RNA polymerase alpha chain family. As to quaternary structure, in plastids the minimal PEP RNA polymerase catalytic core is composed of four subunits: alpha, beta, beta', and beta''. When a (nuclear-encoded) sigma factor is associated with the core the holoenzyme is formed, which can initiate transcription.

The protein resides in the plastid. It is found in the chloroplast. It catalyses the reaction RNA(n) + a ribonucleoside 5'-triphosphate = RNA(n+1) + diphosphate. In terms of biological role, DNA-dependent RNA polymerase catalyzes the transcription of DNA into RNA using the four ribonucleoside triphosphates as substrates. The sequence is that of DNA-directed RNA polymerase subunit alpha from Psathyrostachys fragilis (Russian wild rye).